Reading from the N-terminus, the 685-residue chain is Potassium-transporting ATPase ATP-binding subunit (685 aa).

Transmembrane regions (helical) follow at residues 36–56 (MFVVEVGFFVTILLTIFPSIF), 68–88 (LIVTIILFITVLFANFAESVA), 218–238 (IALNTILVSLTLIFLIVLVAL), and 255–275 (IALLVCLIPTTIGGLLSAIGI). The 4-aspartylphosphate intermediate role is filled by Asp306. ATP contacts are provided by residues Asp343, Glu347, 375 to 382 (FTAQTRMS), and Lys394. 2 residues coordinate Mg(2+): Asp517 and Asp521. A run of 3 helical transmembrane segments spans residues 587–607 (FAIIPAIFTIAIPKMQLMNIM), 615–635 (AILSALIFNAIIIPALIPIAM), and 654–674 (IVFGFGGIIVPFVGIKIIDMI).

It belongs to the cation transport ATPase (P-type) (TC 3.A.3) family. Type IA subfamily. As to quaternary structure, the system is composed of three essential subunits: KdpA, KdpB and KdpC.

Its subcellular location is the cell membrane. The catalysed reaction is K(+)(out) + ATP + H2O = K(+)(in) + ADP + phosphate + H(+). In terms of biological role, part of the high-affinity ATP-driven potassium transport (or Kdp) system, which catalyzes the hydrolysis of ATP coupled with the electrogenic transport of potassium into the cytoplasm. This subunit is responsible for energy coupling to the transport system and for the release of the potassium ions to the cytoplasm. The sequence is that of Potassium-transporting ATPase ATP-binding subunit from Clostridium acetobutylicum (strain ATCC 824 / DSM 792 / JCM 1419 / IAM 19013 / LMG 5710 / NBRC 13948 / NRRL B-527 / VKM B-1787 / 2291 / W).